We begin with the raw amino-acid sequence, 1889 residues long: Protein TIC 214 (1889 aa).

6 helical membrane-spanning segments follow: residues 11–31, 67–87, 88–108, 127–147, 175–195, and 224–244; these read LISL…YYGF, FIAG…HLAL, GKPH…FFWN, LSIQ…HFIL, VGWL…LVWI, and IFSI…PSPI. The span at 255–265 shows a compositional bias: acidic residues; the sequence is PEEVGESEEER. 2 disordered regions span residues 255–303 and 1610–1633; these read PEEV…PSKE and SNQE…KKKQ. A compositionally biased stretch (polar residues) spans 279–293; the sequence is NQKQGTEENTSSSLF.

It belongs to the TIC214 family. As to quaternary structure, part of the Tic complex.

Its subcellular location is the plastid. It is found in the chloroplast inner membrane. In terms of biological role, involved in protein precursor import into chloroplasts. May be part of an intermediate translocation complex acting as a protein-conducting channel at the inner envelope. The sequence is that of Protein TIC 214 from Gossypium barbadense (Sea Island cotton).